The chain runs to 265 residues: Probable S-methyl-5'-thioinosine phosphorylase (265 aa).

Phosphate-binding positions include serine 15 and 55–56 (RH). Methionine 187 serves as a coordination point for substrate. Threonine 188 contributes to the phosphate binding site. Substrate is bound at residue 211-213 (NYA).

The protein belongs to the PNP/MTAP phosphorylase family. MTAP subfamily. In terms of assembly, homotrimer.

It catalyses the reaction S-methyl-5'-thioinosine + phosphate = 5-(methylsulfanyl)-alpha-D-ribose 1-phosphate + hypoxanthine. Its pathway is purine metabolism; purine nucleoside salvage. In terms of biological role, catalyzes the reversible phosphorylation of S-methyl-5'-thioinosine (MTI) to hypoxanthine and 5-methylthioribose-1-phosphate. Involved in the breakdown of S-methyl-5'-thioadenosine (MTA), a major by-product of polyamine biosynthesis. Catabolism of (MTA) occurs via deamination to MTI and phosphorolysis to hypoxanthine. The chain is Probable S-methyl-5'-thioinosine phosphorylase from Thermodesulfovibrio yellowstonii (strain ATCC 51303 / DSM 11347 / YP87).